Consider the following 928-residue polypeptide: Serine/threonine-protein kinase atg1 (928 aa).

Residues 6 to 315 (YTRLDEIGRG…FPEFFENEVI (310 aa)) enclose the Protein kinase domain. Residues 12-20 (IGRGSFATV) and lysine 35 contribute to the ATP site. Aspartate 149 acts as the Proton acceptor in catalysis. Disordered stretches follow at residues 318–470 (PIPG…EQER) and 544–571 (FSGRSRADSTHHRQASYERRYGQSPTSA). The segment covering 359 to 371 (TRREREVNREDVY) has biased composition (basic and acidic residues). The segment covering 437 to 452 (TTTAIERQRSRNTYSE) has biased composition (polar residues). Composition is skewed to basic and acidic residues over residues 459-470 (QPADKLKEEQER) and 548-564 (SRADSTHHRQASYERRY).

The protein belongs to the protein kinase superfamily. Ser/Thr protein kinase family. APG1/unc-51/ULK1 subfamily. In terms of assembly, homodimer. Forms a ternary complex with ATG13 and ATG17.

The protein localises to the cytoplasm. The protein resides in the preautophagosomal structure membrane. It carries out the reaction L-seryl-[protein] + ATP = O-phospho-L-seryl-[protein] + ADP + H(+). It catalyses the reaction L-threonyl-[protein] + ATP = O-phospho-L-threonyl-[protein] + ADP + H(+). In terms of biological role, serine/threonine protein kinase involved in the cytoplasm to vacuole transport (Cvt) and found to be essential in autophagy, where it is required for the formation of autophagosomes. Involved in the clearance of protein aggregates which cannot be efficiently cleared by the proteasome. Required for selective autophagic degradation of the nucleus (nucleophagy) as well as for mitophagy which contributes to regulate mitochondrial quantity and quality by eliminating the mitochondria to a basal level to fulfill cellular energy requirements and preventing excess ROS production. Also involved in endoplasmic reticulum-specific autophagic process, in selective removal of ER-associated degradation (ERAD) substrates. Plays a key role in ATG9 and ATG23 cycling through the pre-autophagosomal structure and is necessary to promote ATG18 binding to ATG9 through phosphorylation of ATG9. Catalyzes phosphorylation of ATG4, decreasing the interaction between ATG4 and ATG8 and impairing deconjugation of PE-conjugated forms of ATG8. The sequence is that of Serine/threonine-protein kinase atg1 from Aspergillus clavatus (strain ATCC 1007 / CBS 513.65 / DSM 816 / NCTC 3887 / NRRL 1 / QM 1276 / 107).